The primary structure comprises 880 residues: GRB2-associated and regulator of MAPK protein 2 (880 aa).

A CABIT region spans residues R12–R320. 5 disordered regions span residues P385–S407, I461–V483, S527–S548, S569–P611, and A633–Q713. Low complexity-rich tracts occupy residues P640–G663 and Q683–S696. A Phosphoserine modification is found at S740. Residues S813–R877 form the SAM domain.

This sequence belongs to the GAREM family.

In terms of biological role, probable adapter protein that provides a critical link between cell surface epidermal growth factor receptor and the MAPK/ERK signaling pathway. The polypeptide is GRB2-associated and regulator of MAPK protein 2 (Garem2) (Mus musculus (Mouse)).